The following is a 231-amino-acid chain: NADH-ubiquinone oxidoreductase chain 4 (231 aa).

A run of 6 helical transmembrane segments spans residues 1 to 21 (PIAGSMVLAAILLKLGGYGMI), 34 to 54 (MFMPFIVLALWGAILANLTCL), 63 to 85 (IAYSSISHMGLVVAAIIIQTPWG), 89 to 111 (AMALMIAHGFTSSALFCLANTTY), 128 to 148 (ILPMTTTWWLLANLMNIAIPP), and 156 to 176 (FLIMSALFNWAPTTIILLGLS).

Belongs to the complex I subunit 4 family.

Its subcellular location is the mitochondrion membrane. It carries out the reaction a ubiquinone + NADH + 5 H(+)(in) = a ubiquinol + NAD(+) + 4 H(+)(out). Functionally, core subunit of the mitochondrial membrane respiratory chain NADH dehydrogenase (Complex I) that is believed to belong to the minimal assembly required for catalysis. Complex I functions in the transfer of electrons from NADH to the respiratory chain. The immediate electron acceptor for the enzyme is believed to be ubiquinone. The chain is NADH-ubiquinone oxidoreductase chain 4 (MT-ND4) from Bothriechis schlegelii (Eyelash palm pitviper).